A 311-amino-acid chain; its full sequence is Giardin subunit gamma (311 aa).

Residues 185–233 (GLQTEINSLEAIIEREFAQAANRLNQEVSNFKESFDASERNIKLQKKHV) adopt a coiled-coil conformation.

As to quaternary structure, interacts with EB1.

The protein resides in the cytoplasm. The protein localises to the cytoskeleton. Its function is as follows. Giardins are involved in parasite attachment to the intestinal mucosa and in the cytoskeletal disassembly and reassembly that marks the transition from infectious trophozoite to transmissible cyst. They may interact with other cytoskeletal proteins such as microtubules in the microribbons or crossbridges, to maintain the integrity of the ventral disk. Involved in formation of the ventral disk. This chain is Giardin subunit gamma, found in Giardia intestinalis (Giardia lamblia).